The sequence spans 929 residues: Dual serine/threonine and tyrosine protein kinase (929 aa).

The span at 1-14 (MEGDGVPWGSEPVS) shows a compositional bias: low complexity. The interval 1–21 (MEGDGVPWGSEPVSGPGPGGG) is disordered. 2 coiled-coil regions span residues 189–215 (EEDL…MHHA) and 395–431 (RKKE…KEEL). The 255-residue stretch at 652-906 (PKLGQELGRG…PLLGIVQPML (255 aa)) folds into the Protein kinase domain. ATP contacts are provided by residues 658–666 (LGRGQYGVV) and Lys681. The active-site Proton acceptor is Asp777.

It belongs to the protein kinase superfamily. Ser/Thr protein kinase family. In terms of tissue distribution, predominantly expressed in skeletal muscle and testis. Expressed in basolateral and apical membranes of all tubular epithelia. Expressed in thin ascending limb of the loop of Henle and the distal convoluted tubule. Expressed in all layers of transitional ureteric epithelium and in the ureteric smooth-muscle cells. Weakly expressed in heart, brain, placenta, kidney, pancreas, spleen, thymus, prostate, uterus, small intestine, white blood cells, stomach, spinal cord and adrenal gland. Is widely distributed in the CNS. Also detected in several tumor cell lines. Expressed in the skin.

Its subcellular location is the cytoplasm. The protein resides in the cell membrane. It localises to the apical cell membrane. The protein localises to the basolateral cell membrane. It is found in the cell junction. It catalyses the reaction L-seryl-[protein] + ATP = O-phospho-L-seryl-[protein] + ADP + H(+). The catalysed reaction is L-threonyl-[protein] + ATP = O-phospho-L-threonyl-[protein] + ADP + H(+). The enzyme catalyses L-tyrosyl-[protein] + ATP = O-phospho-L-tyrosyl-[protein] + ADP + H(+). Acts as a positive regulator of ERK phosphorylation downstream of fibroblast growth factor-receptor activation. Involved in the regulation of both caspase-dependent apoptosis and caspase-independent cell death. In the skin, it plays a predominant role in suppressing caspase-dependent apoptosis in response to UV stress in a range of dermal cell types. The chain is Dual serine/threonine and tyrosine protein kinase (DSTYK) from Homo sapiens (Human).